Here is a 362-residue protein sequence, read N- to C-terminus: Probable dual-specificity RNA methyltransferase RlmN (362 aa).

E105 functions as the Proton acceptor in the catalytic mechanism. One can recognise a Radical SAM core domain in the interval 111 to 344 (HEYGNSICVT…VTIRREQGHD (234 aa)). C118 and C349 form a disulfide bridge. [4Fe-4S] cluster contacts are provided by C125, C129, and C132. S-adenosyl-L-methionine-binding positions include 175–176 (GE), S207, 230–232 (SLH), and N306. C349 serves as the catalytic S-methylcysteine intermediate.

Belongs to the radical SAM superfamily. RlmN family. [4Fe-4S] cluster serves as cofactor.

The protein resides in the cytoplasm. The enzyme catalyses adenosine(2503) in 23S rRNA + 2 reduced [2Fe-2S]-[ferredoxin] + 2 S-adenosyl-L-methionine = 2-methyladenosine(2503) in 23S rRNA + 5'-deoxyadenosine + L-methionine + 2 oxidized [2Fe-2S]-[ferredoxin] + S-adenosyl-L-homocysteine. It carries out the reaction adenosine(37) in tRNA + 2 reduced [2Fe-2S]-[ferredoxin] + 2 S-adenosyl-L-methionine = 2-methyladenosine(37) in tRNA + 5'-deoxyadenosine + L-methionine + 2 oxidized [2Fe-2S]-[ferredoxin] + S-adenosyl-L-homocysteine. Specifically methylates position 2 of adenine 2503 in 23S rRNA and position 2 of adenine 37 in tRNAs. The chain is Probable dual-specificity RNA methyltransferase RlmN from Bacillus thuringiensis subsp. konkukian (strain 97-27).